Consider the following 329-residue polypeptide: uncharacterized protein (329 aa).

Residues 56 to 247 adopt a coiled-coil conformation; sequence LNKEEQFQED…EAEKTHQAKL (192 aa).

This is an uncharacterized protein from Bos taurus (Bovine).